The primary structure comprises 131 residues: Protein Turandot M (131 aa).

Residues 1 to 23 (MNPTVYLSCLVVFSLFYLGKAQA) form the signal peptide.

Belongs to the Turandot family.

It is found in the secreted. In terms of biological role, a humoral factor that may play a role in stress tolerance. Requires Mekk1 expression in the fat body to regulate response to septic injury and consequent immune response. The chain is Protein Turandot M from Drosophila yakuba (Fruit fly).